The chain runs to 507 residues: RNA-binding protein Nova-1 (507 aa).

The disordered stretch occupies residues M1–T44. Positions K27–N43 match the Bipartite nuclear localization signal motif. The KH 1 domain occupies Q49–I116. Residues Q139–A171 are disordered. Residues T150 to S169 are compositionally biased toward low complexity. At S154 the chain carries Phosphoserine. KH domains follow at residues A171–I237 and K421–I488. The interval G419–P503 is required for RNA binding.

In terms of assembly, interacts with PTBP2; the interaction is direct. Expressed in cerebellum, brain stem, hippocampus, and frontal cortex.

It localises to the nucleus. Functionally, functions to regulate alternative splicing in neurons by binding pre-mRNA in a sequence-specific manner to activate exon inclusion or exclusion. It binds specifically to the sequences 5'-YCAY-3' and regulates splicing in only a subset of regulated exons. Binding to an exonic 5'-YCAY-3' cluster changes the protein complexes assembled on pre-mRNA, blocking U1 snRNP binding and exon inclusion, whereas binding to an intronic 5'-YCAY-3' cluster enhances spliceosome assembly and exon inclusion. Binding to 5'-YCAY-3' clusters results in a local and asymmetric action to regulate spliceosome assembly and alternative splicing in neurons. Binding to an exonic 5'-YCAY-3' cluster changed the protein complexes assembled on pre-mRNA, blocking U1 snRNP (small nuclear ribonucleoprotein) binding and exon inclusion, whereas binding to an intronic 5'-YCAY-3' cluster enhanced spliceosome assembly and exon inclusion. With NOVA1, they perform unique biological functions in different brain areas and cell types. Autoregulates its own expression by acting as a splicing repressor. Acts to activate the inclusion of exon E3A in the glycine receptor alpha-2 chain and of exon E9 in gamma-aminobutyric-acid receptor gamma-2 subunit via a distal downstream UCAU-rich intronic splicing enhancer. Acts to regulate a novel glycine receptor alpha-2 chain splice variant (alpha-2N) in developing spinal cord. This is RNA-binding protein Nova-1 from Homo sapiens (Human).